The chain runs to 102 residues: Small ribosomal subunit protein uS10 (102 aa).

A disordered region spans residues 34–58; it reads LSGPVPLPTKTLEIPARKSPDGEGT.

Belongs to the universal ribosomal protein uS10 family. Part of the 30S ribosomal subunit.

Functionally, involved in the binding of tRNA to the ribosomes. In Natronomonas pharaonis (strain ATCC 35678 / DSM 2160 / CIP 103997 / JCM 8858 / NBRC 14720 / NCIMB 2260 / Gabara) (Halobacterium pharaonis), this protein is Small ribosomal subunit protein uS10.